We begin with the raw amino-acid sequence, 347 residues long: NADH-ubiquinone oxidoreductase chain 2 (347 aa).

10 consecutive transmembrane segments (helical) span residues 13 to 33 (IFAG…WVGL), 55 to 75 (AAIK…MAIL), 96 to 116 (LMIM…FWVP), 123 to 143 (PLMS…SIMY), 149 to 169 (LNVN…SWGG), 178 to 198 (ILAY…PYNP), 201 to 221 (TILN…LLNL), 247 to 267 (TLLS…WVII), 274 to 294 (NSLI…YFYL), and 326 to 346 (LPTL…MLMI).

It belongs to the complex I subunit 2 family. In terms of assembly, core subunit of respiratory chain NADH dehydrogenase (Complex I) which is composed of 45 different subunits. Interacts with TMEM242.

It localises to the mitochondrion inner membrane. The catalysed reaction is a ubiquinone + NADH + 5 H(+)(in) = a ubiquinol + NAD(+) + 4 H(+)(out). Functionally, core subunit of the mitochondrial membrane respiratory chain NADH dehydrogenase (Complex I) which catalyzes electron transfer from NADH through the respiratory chain, using ubiquinone as an electron acceptor. Essential for the catalytic activity and assembly of complex I. The chain is NADH-ubiquinone oxidoreductase chain 2 from Pan paniscus (Pygmy chimpanzee).